The following is a 371-amino-acid chain: Pyruvate dehydrogenase E1 component subunit alpha (371 aa).

As to quaternary structure, heterodimer of an alpha and a beta chain. Thiamine diphosphate is required as a cofactor.

It carries out the reaction N(6)-[(R)-lipoyl]-L-lysyl-[protein] + pyruvate + H(+) = N(6)-[(R)-S(8)-acetyldihydrolipoyl]-L-lysyl-[protein] + CO2. Its activity is regulated as follows. Activity of the E1 module is inhibited by the pyruvate dehydrogenase inhibitor PdhI. In terms of biological role, the pyruvate dehydrogenase complex catalyzes the overall conversion of pyruvate to acetyl-CoA and CO(2). It contains multiple copies of three enzymatic components: pyruvate dehydrogenase (E1), dihydrolipoamide acetyltransferase (E2) and lipoamide dehydrogenase (E3). Functionally, the B.subtilis PDH complex also possesses branched-chain 2-oxoacid dehydrogenase (BCDH) activity. This is Pyruvate dehydrogenase E1 component subunit alpha from Bacillus subtilis (strain 168).